Reading from the N-terminus, the 236-residue chain is Phosphoribosylaminoimidazole-succinocarboxamide synthase (236 aa).

This sequence belongs to the SAICAR synthetase family.

It carries out the reaction 5-amino-1-(5-phospho-D-ribosyl)imidazole-4-carboxylate + L-aspartate + ATP = (2S)-2-[5-amino-1-(5-phospho-beta-D-ribosyl)imidazole-4-carboxamido]succinate + ADP + phosphate + 2 H(+). It functions in the pathway purine metabolism; IMP biosynthesis via de novo pathway; 5-amino-1-(5-phospho-D-ribosyl)imidazole-4-carboxamide from 5-amino-1-(5-phospho-D-ribosyl)imidazole-4-carboxylate: step 1/2. This chain is Phosphoribosylaminoimidazole-succinocarboxamide synthase, found in Pseudomonas paraeruginosa (strain DSM 24068 / PA7) (Pseudomonas aeruginosa (strain PA7)).